The primary structure comprises 236 residues: MAATLLDVCAVVPAAGFGRRMQTECPKQYLSIGNKTILEHSVHALLAHPRVTRVVIAISPGDHRFAQLPLANHPQITVVDGGNERADSVLAGLQAVAKAQWVLVHDAARPCLHQDDLARLLTISENSRVGGILASPVRDTMKRGEPGKNAIAHTVERADLWHALTPQFFPRELLHDCLTRALNEGATITDEASALEYCGFHPALVEGRADNIKVTRPEDLALAEFYLTRTIHQEKA.

The protein belongs to the IspD/TarI cytidylyltransferase family. IspD subfamily. Homodimer.

The catalysed reaction is 2-C-methyl-D-erythritol 4-phosphate + CTP + H(+) = 4-CDP-2-C-methyl-D-erythritol + diphosphate. Its pathway is isoprenoid biosynthesis; isopentenyl diphosphate biosynthesis via DXP pathway; isopentenyl diphosphate from 1-deoxy-D-xylulose 5-phosphate: step 2/6. In terms of biological role, catalyzes the formation of 4-diphosphocytidyl-2-C-methyl-D-erythritol from CTP and 2-C-methyl-D-erythritol 4-phosphate (MEP). The protein is 2-C-methyl-D-erythritol 4-phosphate cytidylyltransferase of Salmonella heidelberg (strain SL476).